The following is a 142-amino-acid chain: Large ribosomal subunit protein uL11 (142 aa).

This sequence belongs to the universal ribosomal protein uL11 family. As to quaternary structure, part of the ribosomal stalk of the 50S ribosomal subunit. Interacts with L10 and the large rRNA to form the base of the stalk. L10 forms an elongated spine to which L12 dimers bind in a sequential fashion forming a multimeric L10(L12)X complex. One or more lysine residues are methylated.

Forms part of the ribosomal stalk which helps the ribosome interact with GTP-bound translation factors. This is Large ribosomal subunit protein uL11 from Idiomarina loihiensis (strain ATCC BAA-735 / DSM 15497 / L2-TR).